A 46-amino-acid chain; its full sequence is MIKKILGYSLALAALLVALYYGVMFGLIQVVLFISDVIMALHSLVW.

This is an uncharacterized protein from Escherichia coli (Bacteriophage T4).